We begin with the raw amino-acid sequence, 320 residues long: MPSISVRRLFDDNQYKLQLAWAAGNSGADNRIGVEADKPVLALVGHLNFIHPNQIQVVGLAESEYLNRLESGETGYQFGNLFDISMSLVIVANGLPVSPGLRDYCHKNDIPLLTSKLESPYLMDVLRIYLQRTLAASSVKHGVFLDVFEIGVLITGHSGLGKSELALELISRGHSLIADDAVELFRIGPETLEGRCSPMLRDFLEVRGLGILNIRHIFGETSIRPKKILQLIINLVEADDEYMKQLDRLSIRTETESILNVNVRSVTLPVAVGRNLAVLVEAAVRNYILQLRGKDSTREFLERHQTQLKENEQNHENRPD.

Active-site residues include H141 and K162. ATP is bound at residue 156 to 163; it reads GHSGLGKS. S163 lines the Mg(2+) pocket. D180 functions as the Proton acceptor; for phosphorylation activity. Proton donor; for dephosphorylation activity in the catalytic mechanism. The important for the catalytic mechanism of both phosphorylation and dephosphorylation stretch occupies residues 204 to 213; the sequence is LEVRGLGILN. E205 provides a ligand contact to Mg(2+). The active site involves R248. The segment at 269-274 is important for the catalytic mechanism of dephosphorylation; the sequence is PVAVGR.

The protein belongs to the HPrK/P family. Homohexamer. It depends on Mg(2+) as a cofactor.

The enzyme catalyses [HPr protein]-L-serine + ATP = [HPr protein]-O-phospho-L-serine + ADP + H(+). It carries out the reaction [HPr protein]-O-phospho-L-serine + phosphate + H(+) = [HPr protein]-L-serine + diphosphate. Catalyzes the ATP- as well as the pyrophosphate-dependent phosphorylation of a specific serine residue in HPr, a phosphocarrier protein of the phosphoenolpyruvate-dependent sugar phosphotransferase system (PTS). HprK/P also catalyzes the pyrophosphate-producing, inorganic phosphate-dependent dephosphorylation (phosphorolysis) of seryl-phosphorylated HPr (P-Ser-HPr). The chain is HPr kinase/phosphorylase from Neisseria meningitidis serogroup C / serotype 2a (strain ATCC 700532 / DSM 15464 / FAM18).